The chain runs to 204 residues: tRNA (guanine-N(7)-)-methyltransferase (204 aa).

S-adenosyl-L-methionine contacts are provided by E36, E61, and D111. The active site involves D111. Substrate is bound by residues K115, D147, and 177 to 180 (TRFE).

It belongs to the class I-like SAM-binding methyltransferase superfamily. TrmB family.

It carries out the reaction guanosine(46) in tRNA + S-adenosyl-L-methionine = N(7)-methylguanosine(46) in tRNA + S-adenosyl-L-homocysteine. It functions in the pathway tRNA modification; N(7)-methylguanine-tRNA biosynthesis. Its function is as follows. Catalyzes the formation of N(7)-methylguanine at position 46 (m7G46) in tRNA. This is tRNA (guanine-N(7)-)-methyltransferase from Chlorobium phaeobacteroides (strain DSM 266 / SMG 266 / 2430).